Here is a 587-residue protein sequence, read N- to C-terminus: MTLPYRFSSVRNHSLLLKTSHLCTPRSALGCCFSPKESPFFRKNTAQFLSPQKHTSLPLKLVCPLASFSSYADSEGEEQHHADQPIQNPHESSTVSNESDGKGNAEATGDFSGMAQAFHISSTTARAISIVIAFSALTLPIFMKSLGQGLALKTKLLSYATLLFGFYMAWNIGANDVANAMGTSVGSGALTIRQAVMTAAVLEFSGALLMGTHVTSTMQKGILMANVFQGKDMLLFAGLLSSLAAAGTWLQVASYYGWPVSTTHCIVGSMVGFGLVYGGAGAVFWSSLAKVASSWVISPILGALVSFLVYKCIRRFVYSAPNPGQAAAAAAPVAVFVGVASISSAALPLSKIFPIALSQALACGVAGAIVFDRIIRKQLGHLLAKTKSPETSQNQPKTIGFLSDIAGPTGTQLEIVYGIFGYMQVLSACFMSFAHGGNDVSNAIGPLAAALSILQNGAAAGGAEIVIPMDVLAWGGFGIVAGLTMWGYRVIATIGKKITELTPTRGFAAEFAAASVVLFASKLGLPISATHTLVGAVMGVGFARGLNSVRAETVREIVASWLVTIPVGATLAVIYTWIFTKILSFVL.

Residues 1–71 (MTLPYRFSSV…VCPLASFSSY (71 aa)) constitute a chloroplast transit peptide. The tract at residues 74-106 (SEGEEQHHADQPIQNPHESSTVSNESDGKGNAE) is disordered. The segment covering 85 to 98 (PIQNPHESSTVSNE) has biased composition (polar residues). Transmembrane regions (helical) follow at residues 127–147 (AISIVIAFSALTLPIFMKSLG), 154–174 (TKLLSYATLLFGFYMAWNIGA), 195–215 (AVMTAAVLEFSGALLMGTHVT), 233–253 (MLLFAGLLSSLAAAGTWLQVA), 265–285 (CIVGSMVGFGLVYGGAGAVFW), 289–309 (AKVASSWVISPILGALVSFLV), 327–347 (AAAAAPVAVFVGVASISSAAL), 352–372 (IFPIALSQALACGVAGAIVFD), 413–433 (LEIVYGIFGYMQVLSACFMSF), 465–485 (IVIPMDVLAWGGFGIVAGLTM), 523–543 (LGLPISATHTLVGAVMGVGFA), and 559–579 (ASWLVTIPVGATLAVIYTWIF).

It belongs to the inorganic phosphate transporter (PiT) (TC 2.A.20.2) family. As to expression, mostly expressed in young green tissues. Present in both auto- and heterotrophic tissues. Also expressed in root stele.

The protein resides in the plastid. It localises to the chloroplast inner membrane. Low affinity H(+)/Pi chloroplastic cotransporter. Involved in inorganic phosphate (orthophosphate, Pi) uptake in green parts of plants in Pi-sufficient conditions. Required for Pi retranslocation during Pi deprivation. This chain is Inorganic phosphate transporter 2-1, chloroplastic (PHT2-1), found in Arabidopsis thaliana (Mouse-ear cress).